A 120-amino-acid polypeptide reads, in one-letter code: uncharacterized protein (120 aa).

In terms of domain architecture, VOC spans 4-120 (QIGTVAVYVE…EDGNVFLLKE (117 aa)).

This is an uncharacterized protein from Bacillus subtilis (strain 168).